Here is a 323-residue protein sequence, read N- to C-terminus: tRNA(Ile)-lysidine synthase (323 aa).

An ATP-binding site is contributed by 33-38; the sequence is SGGSDS.

This sequence belongs to the tRNA(Ile)-lysidine synthase family.

It localises to the cytoplasm. The catalysed reaction is cytidine(34) in tRNA(Ile2) + L-lysine + ATP = lysidine(34) in tRNA(Ile2) + AMP + diphosphate + H(+). In terms of biological role, ligates lysine onto the cytidine present at position 34 of the AUA codon-specific tRNA(Ile) that contains the anticodon CAU, in an ATP-dependent manner. Cytidine is converted to lysidine, thus changing the amino acid specificity of the tRNA from methionine to isoleucine. In Mycobacterium leprae (strain TN), this protein is tRNA(Ile)-lysidine synthase.